The chain runs to 266 residues: CAAX prenyl protease 2 (266 aa).

3 helical membrane-spanning segments follow: residues 1–21, 42–59, and 78–98; these read MGAG…VHLF, LLSN…LRDY, and ITYP…MMQI. Catalysis depends on proton donor/acceptor residues E131 and H164. The next 3 membrane-spanning stretches (helical) occupy residues 186 to 206, 210 to 230, and 239 to 259; these read GFQF…QLTT, IVPI…WLEI, and RLTL…LLYT.

It belongs to the peptidase U48 family.

The protein localises to the endoplasmic reticulum membrane. It is found in the membrane. It catalyses the reaction Hydrolyzes the peptide bond -P2-(S-farnesyl or geranylgeranyl)C-P1'-P2'-P3'-COOH where P1' and P2' are amino acids with aliphatic sidechains and P3' is any C-terminal residue.. In terms of biological role, protease involved in the processing of a variety of prenylated proteins containing the C-terminal CAAX motif, where C is a cysteine modified with an isoprenoid lipid, A is an aliphatic amino acid and X is any C-terminal amino acid. Proteolytically removes the C-terminal three residues of farnesylated and geranylated proteins, leaving the prenylated cysteine as the new C-terminus. In Caenorhabditis elegans, this protein is CAAX prenyl protease 2.